The primary structure comprises 420 residues: Histidine--tRNA ligase (420 aa).

Belongs to the class-II aminoacyl-tRNA synthetase family. In terms of assembly, homodimer.

Its subcellular location is the cytoplasm. It carries out the reaction tRNA(His) + L-histidine + ATP = L-histidyl-tRNA(His) + AMP + diphosphate + H(+). The polypeptide is Histidine--tRNA ligase (hisS) (Mycoplasmopsis pulmonis (strain UAB CTIP) (Mycoplasma pulmonis)).